The sequence spans 502 residues: Lysine--tRNA ligase (502 aa).

Positions 403 and 410 each coordinate Mg(2+).

Belongs to the class-II aminoacyl-tRNA synthetase family. Homodimer. Mg(2+) serves as cofactor.

It is found in the cytoplasm. The enzyme catalyses tRNA(Lys) + L-lysine + ATP = L-lysyl-tRNA(Lys) + AMP + diphosphate. This chain is Lysine--tRNA ligase, found in Synechococcus sp. (strain CC9902).